Here is a 129-residue protein sequence, read N- to C-terminus: Small ribosomal subunit protein uS11 (129 aa).

This sequence belongs to the universal ribosomal protein uS11 family. Part of the 30S ribosomal subunit. Interacts with proteins S7 and S18. Binds to IF-3.

In terms of biological role, located on the platform of the 30S subunit, it bridges several disparate RNA helices of the 16S rRNA. Forms part of the Shine-Dalgarno cleft in the 70S ribosome. This chain is Small ribosomal subunit protein uS11, found in Cereibacter sphaeroides (strain ATCC 17029 / ATH 2.4.9) (Rhodobacter sphaeroides).